The chain runs to 73 residues: Neurotoxin Cex13 (73 aa).

The signal sequence occupies residues 1–7 (ATGNVWA). The 64-residue stretch at 8–71 (KDGYLVIIKT…TWPLPDKTCG (64 aa)) folds into the LCN-type CS-alpha/beta domain. Cystine bridges form between cysteine 19/cysteine 70, cysteine 23/cysteine 46, cysteine 32/cysteine 51, and cysteine 36/cysteine 53. Position 70 is a cysteine amide (cysteine 70). Positions 71-73 (GTK) are excised as a propeptide.

This sequence belongs to the long (4 C-C) scorpion toxin superfamily. Sodium channel inhibitor family. Beta subfamily. Expressed by the venom gland.

Its subcellular location is the secreted. Beta toxins bind voltage-independently at site-4 of sodium channels (Nav) and shift the voltage of activation toward more negative potentials thereby affecting sodium channel activation and promoting spontaneous and repetitive firing. This is Neurotoxin Cex13 from Centruroides exilicauda (Bark scorpion).